The following is a 174-amino-acid chain: Co-chaperone protein HscB homolog (174 aa).

The J domain maps to 2-74 (NYFELFSFTP…ILRAEHMLSL (73 aa)).

Belongs to the HscB family. In terms of assembly, interacts with HscA and stimulates its ATPase activity.

Functionally, co-chaperone involved in the maturation of iron-sulfur cluster-containing proteins. Seems to help targeting proteins to be folded toward HscA. The sequence is that of Co-chaperone protein HscB homolog from Shewanella woodyi (strain ATCC 51908 / MS32).